The chain runs to 484 residues: tRNA sulfurtransferase (484 aa).

The 105-residue stretch at 63–167 (DVFADRLACI…QDKLYMVERR (105 aa)) folds into the THUMP domain. ATP-binding positions include 185–186 (LI), Lys-267, Gly-289, and Gln-298. Cys-346 and Cys-458 are joined by a disulfide. The Rhodanese domain occupies 406-484 (VASGEIIIDV…GYTNVKVYRP (79 aa)). Residue Cys-458 is the Cysteine persulfide intermediate of the active site.

This sequence belongs to the ThiI family.

Its subcellular location is the cytoplasm. It carries out the reaction [ThiI sulfur-carrier protein]-S-sulfanyl-L-cysteine + a uridine in tRNA + 2 reduced [2Fe-2S]-[ferredoxin] + ATP + H(+) = [ThiI sulfur-carrier protein]-L-cysteine + a 4-thiouridine in tRNA + 2 oxidized [2Fe-2S]-[ferredoxin] + AMP + diphosphate. It catalyses the reaction [ThiS sulfur-carrier protein]-C-terminal Gly-Gly-AMP + S-sulfanyl-L-cysteinyl-[cysteine desulfurase] + AH2 = [ThiS sulfur-carrier protein]-C-terminal-Gly-aminoethanethioate + L-cysteinyl-[cysteine desulfurase] + A + AMP + 2 H(+). It functions in the pathway cofactor biosynthesis; thiamine diphosphate biosynthesis. Functionally, catalyzes the ATP-dependent transfer of a sulfur to tRNA to produce 4-thiouridine in position 8 of tRNAs, which functions as a near-UV photosensor. Also catalyzes the transfer of sulfur to the sulfur carrier protein ThiS, forming ThiS-thiocarboxylate. This is a step in the synthesis of thiazole, in the thiamine biosynthesis pathway. The sulfur is donated as persulfide by IscS. The polypeptide is tRNA sulfurtransferase (Shewanella frigidimarina (strain NCIMB 400)).